Here is a 141-residue protein sequence, read N- to C-terminus: Large ribosomal subunit protein uL11 (141 aa).

This sequence belongs to the universal ribosomal protein uL11 family. As to quaternary structure, part of the ribosomal stalk of the 50S ribosomal subunit. Interacts with L10 and the large rRNA to form the base of the stalk. L10 forms an elongated spine to which L12 dimers bind in a sequential fashion forming a multimeric L10(L12)X complex. One or more lysine residues are methylated.

In terms of biological role, forms part of the ribosomal stalk which helps the ribosome interact with GTP-bound translation factors. The polypeptide is Large ribosomal subunit protein uL11 (Thermotoga neapolitana (strain ATCC 49049 / DSM 4359 / NBRC 107923 / NS-E)).